Consider the following 282-residue polypeptide: 3-methyl-2-oxobutanoate hydroxymethyltransferase (282 aa).

D44 and D83 together coordinate Mg(2+). 3-methyl-2-oxobutanoate is bound by residues 44 to 45 (DS), D83, and K113. Residue E115 participates in Mg(2+) binding. E182 functions as the Proton acceptor in the catalytic mechanism.

This sequence belongs to the PanB family. As to quaternary structure, homodecamer; pentamer of dimers. It depends on Mg(2+) as a cofactor.

The protein localises to the cytoplasm. It catalyses the reaction 3-methyl-2-oxobutanoate + (6R)-5,10-methylene-5,6,7,8-tetrahydrofolate + H2O = 2-dehydropantoate + (6S)-5,6,7,8-tetrahydrofolate. It functions in the pathway cofactor biosynthesis; (R)-pantothenate biosynthesis; (R)-pantoate from 3-methyl-2-oxobutanoate: step 1/2. Its function is as follows. Catalyzes the reversible reaction in which hydroxymethyl group from 5,10-methylenetetrahydrofolate is transferred onto alpha-ketoisovalerate to form ketopantoate. The protein is 3-methyl-2-oxobutanoate hydroxymethyltransferase of Dehalococcoides mccartyi (strain ATCC BAA-2266 / KCTC 15142 / 195) (Dehalococcoides ethenogenes (strain 195)).